The sequence spans 196 residues: Adenylate kinase (196 aa).

9-17 serves as a coordination point for ATP; the sequence is GIPGVGKST.

The protein belongs to the archaeal adenylate kinase family.

The protein localises to the cytoplasm. It carries out the reaction AMP + ATP = 2 ADP. This is Adenylate kinase (adkA) from Pyrococcus horikoshii (strain ATCC 700860 / DSM 12428 / JCM 9974 / NBRC 100139 / OT-3).